We begin with the raw amino-acid sequence, 273 residues long: Large ribosomal subunit protein uL2cz/uL2cy (273 aa).

A disordered region spans residues 224-273; it reads NPVDHPHGGGEGRAPIGRKKPATPWGYPALGRRSRKRNKYSDRFILRRRK. A compositionally biased stretch (basic and acidic residues) spans 262 to 273; sequence KYSDRFILRRRK.

The protein belongs to the universal ribosomal protein uL2 family. In terms of assembly, part of the 50S ribosomal subunit.

The protein resides in the plastid. It is found in the chloroplast. The sequence is that of Large ribosomal subunit protein uL2cz/uL2cy (rpl2-A) from Piper cenocladum (Ant piper).